Here is a 21-residue protein sequence, read N- to C-terminus: Pedibin (21 aa).

The segment at 1 to 21 is disordered; the sequence is AGEDVSHELEEKEKALANHSE.

Functionally, morphogenetically active peptide. Active in foot development. The protein is Pedibin of Hydra vulgaris (Hydra).